Here is a 210-residue protein sequence, read N- to C-terminus: ATP phosphoribosyltransferase (210 aa).

It belongs to the ATP phosphoribosyltransferase family. Short subfamily. Heteromultimer composed of HisG and HisZ subunits.

The protein localises to the cytoplasm. It carries out the reaction 1-(5-phospho-beta-D-ribosyl)-ATP + diphosphate = 5-phospho-alpha-D-ribose 1-diphosphate + ATP. It functions in the pathway amino-acid biosynthesis; L-histidine biosynthesis; L-histidine from 5-phospho-alpha-D-ribose 1-diphosphate: step 1/9. Its function is as follows. Catalyzes the condensation of ATP and 5-phosphoribose 1-diphosphate to form N'-(5'-phosphoribosyl)-ATP (PR-ATP). Has a crucial role in the pathway because the rate of histidine biosynthesis seems to be controlled primarily by regulation of HisG enzymatic activity. The polypeptide is ATP phosphoribosyltransferase (Bacillus cytotoxicus (strain DSM 22905 / CIP 110041 / 391-98 / NVH 391-98)).